We begin with the raw amino-acid sequence, 101 residues long: Small ribosomal subunit protein uS14 (101 aa).

Belongs to the universal ribosomal protein uS14 family. Part of the 30S ribosomal subunit. Contacts proteins S3 and S10.

Functionally, binds 16S rRNA, required for the assembly of 30S particles and may also be responsible for determining the conformation of the 16S rRNA at the A site. The sequence is that of Small ribosomal subunit protein uS14 from Ruegeria sp. (strain TM1040) (Silicibacter sp.).